The sequence spans 491 residues: FAD-dependent monooxygenase idtM (491 aa).

5 residues coordinate FAD: E34, G48, R107, D307, and A320. A helical transmembrane segment spans residues 448-468 (ILSLVYVVAGLAMMYMSIYLV).

Belongs to the paxM FAD-dependent monooxygenase family. FAD serves as cofactor.

It is found in the membrane. It functions in the pathway secondary metabolite biosynthesis. In terms of biological role, FAD-dependent monooxygenase; part of the gene cluster that mediates the biosynthesis of paspalitrems, indole-diterpene (IDT) mycotoxins that are potent tremorgens in mammals. The geranylgeranyl diphosphate (GGPP) synthase idtG is proposed to catalyze the first step in IDT biosynthesis via catalysis of a series of iterative condensations of isopentenyl diphosphate (IPP) with dimethylallyl diphosphate (DMAPP), geranyl diphosphate (GPP), and farnesyl diphosphate (FPP), to form GGPP. Condensation of indole-3-glycerol phosphate with GGPP by the prenyltransferase idtC then forms 3-geranylgeranylindole (3-GGI). Epoxidation of the two terminal alkenes of the geranylgeranyl moiety by the FAD-dependent monooxygenase idtM, and cyclization by the terpene cyclase idtB then leads to the production of paspaline. The cytochrome P450 monooxygenase idtP then catalyzes oxidative elimination of the pendant methyl group at C-12 of paspaline and generates the C-10 ketone to yield 13-desoxypaxilline. The cytochrome P450 monooxygenase idtQ may catalyze the C-13 oxidation of 13-desoxypaxilline to afford paxilline. Considering that both paspalicine and paxilline were detected in C.paspali, idtQ also catalyzes the formation of paspalinine from 13-desoxypaxilline via paspalicine as an intermediate. Finally, the alpha-prenyltransferase idtF prenylates paspalinine at the C-20 or the C-21 positions to yield paspalitrems A and C, respectively. The hydroxylation of paspalitrem A at C-32 by a still unknown oxidase affords paspalitrem B. This is FAD-dependent monooxygenase idtM from Claviceps paspali (Rye ergot fungus).